The chain runs to 664 residues: 26S rRNA (cytosine-C(5))-methyltransferase nsun-1 (664 aa).

The segment at 1 to 105 is disordered; it reads MAIVKKKKVS…DDSDAGDHLP (105 aa). The segment covering 38-52 has biased composition (basic residues); that stretch reads PKKKKLVKKVKKSAK. Residues 53 to 68 are compositionally biased toward basic and acidic residues; it reads KAHEEEPIEQVEKLQL. A compositionally biased stretch (acidic residues) spans 84–99; the sequence is SDDEDLRDDYSDDDSD. S-adenosyl-L-methionine contacts are provided by residues 313 to 319, Asp337, and Asp382; that span reads CSAPGGK. The active-site Nucleophile is Cys439. The segment at 513–664 is disordered; that stretch reads KMSKQGVMEK…RRKKMLAKQQ (152 aa). Residues 519–528 are compositionally biased toward basic and acidic residues; it reads VMEKEKEKAA. Acidic residues predominate over residues 541 to 550; the sequence is EASESSDDEE. Residues 563–572 show a composition bias toward basic residues; it reads KPAKKQQQKK. The segment covering 606-618 has biased composition (basic and acidic residues); that stretch reads KAAEKQAAVKEDD. 2 stretches are compositionally biased toward basic residues: residues 627–644 and 652–664; these read KRAK…KRAA and VKNR…AKQQ.

It belongs to the class I-like SAM-binding methyltransferase superfamily. RsmB/NOP family.

It localises to the nucleus. The protein resides in the nucleolus. The catalysed reaction is a cytidine in 26S rRNA + S-adenosyl-L-methionine = a 5-methylcytidine in 26S rRNA + S-adenosyl-L-homocysteine + H(+). Methyltransferase which methylates the carbon-5 position of cytosine 2982 to 5-methylcytosine (m5C2982) in 26S rRNA. May play a role in the translation of leucine and proline codons. May be required for the translation of specific mRNAs such as mRNAs involved in gonad development, collagen production and cuticle integrity. Plays a role in ensuring the correct localization of the germline-specific protein gld-1 during development. Not required for pre-rRNA processing, the production of mature 5S, 5.8S, 18S or 26S rRNAs or global translation. Plays a role in positively regulating fertility. This is 26S rRNA (cytosine-C(5))-methyltransferase nsun-1 from Caenorhabditis elegans.